The sequence spans 246 residues: UPF0246 protein str1967 (246 aa).

Belongs to the UPF0246 family.

The protein is UPF0246 protein str1967 of Streptococcus thermophilus (strain CNRZ 1066).